The chain runs to 87 residues: Large ribosomal subunit protein bL31B (87 aa).

The protein belongs to the bacterial ribosomal protein bL31 family. Type B subfamily. As to quaternary structure, part of the 50S ribosomal subunit.

The polypeptide is Large ribosomal subunit protein bL31B (Salinispora arenicola (strain CNS-205)).